We begin with the raw amino-acid sequence, 108 residues long: Small ribosomal subunit protein uS10 (108 aa).

It belongs to the universal ribosomal protein uS10 family. As to quaternary structure, part of the 30S ribosomal subunit.

Its function is as follows. Involved in the binding of tRNA to the ribosomes. The polypeptide is Small ribosomal subunit protein uS10 (Ehrlichia chaffeensis (strain ATCC CRL-10679 / Arkansas)).